Consider the following 36-residue polypeptide: Photosystem I reaction center subunit VIII (36 aa).

The helical transmembrane segment at 9 to 29 (IFVPLVGLVFPAVAMASLFLY) threads the bilayer.

It belongs to the PsaI family.

Its subcellular location is the plastid. The protein resides in the chloroplast thylakoid membrane. In terms of biological role, may help in the organization of the PsaL subunit. The sequence is that of Photosystem I reaction center subunit VIII from Ostreococcus tauri.